Consider the following 61-residue polypeptide: Photosystem II reaction center X protein (61 aa).

A helical membrane pass occupies residues 26 to 46 (IGSFIAAALLIVIPATAFLIF).

It belongs to the PsbX family. Type 2 subfamily. PSII consists of a core antenna complex that captures photons, and an electron transfer chain that converts photonic excitation into a charge separation. PSII forms dimeric complexes.

It is found in the cellular thylakoid membrane. Its function is as follows. Involved in the binding and/or turnover of quinones at the Q(B) site of Photosystem II. The chain is Photosystem II reaction center X protein from Prochlorococcus marinus (strain MIT 9215).